Consider the following 119-residue polypeptide: Small ribosomal subunit protein uS13 (119 aa).

The interval 92 to 119 (RRGLPVRGQQTQTNARTRKGPRRGPASR) is disordered.

This sequence belongs to the universal ribosomal protein uS13 family. In terms of assembly, part of the 30S ribosomal subunit. Forms a loose heterodimer with protein S19. Forms two bridges to the 50S subunit in the 70S ribosome.

Its function is as follows. Located at the top of the head of the 30S subunit, it contacts several helices of the 16S rRNA. In the 70S ribosome it contacts the 23S rRNA (bridge B1a) and protein L5 of the 50S subunit (bridge B1b), connecting the 2 subunits; these bridges are implicated in subunit movement. Contacts the tRNAs in the A and P-sites. The protein is Small ribosomal subunit protein uS13 of Halorhodospira halophila (strain DSM 244 / SL1) (Ectothiorhodospira halophila (strain DSM 244 / SL1)).